Reading from the N-terminus, the 372-residue chain is Putative aminopeptidase SgcX (372 aa).

A divalent metal cation contacts are provided by histidine 67 and aspartate 180. Glutamate 212 (proton acceptor) is an active-site residue. Residues glutamate 213, aspartate 235, and histidine 329 each coordinate a divalent metal cation.

This sequence belongs to the peptidase M42 family. The cofactor is a divalent metal cation.

In Salmonella typhimurium (strain LT2 / SGSC1412 / ATCC 700720), this protein is Putative aminopeptidase SgcX (sgcX).